The primary structure comprises 463 residues: Bifunctional protein HldE (463 aa).

The ribokinase stretch occupies residues 1-315 (MKKILVIGDL…LILNQTHPKI (315 aa)). An ATP-binding site is contributed by 191 to 194 (NRAE). The active site involves D260. Residues 334–463 (FTNGCFDILH…IEKIKRTHND (130 aa)) form a cytidylyltransferase region.

It in the N-terminal section; belongs to the carbohydrate kinase PfkB family. This sequence in the C-terminal section; belongs to the cytidylyltransferase family. Homodimer.

The enzyme catalyses D-glycero-beta-D-manno-heptose 7-phosphate + ATP = D-glycero-beta-D-manno-heptose 1,7-bisphosphate + ADP + H(+). It carries out the reaction D-glycero-beta-D-manno-heptose 1-phosphate + ATP + H(+) = ADP-D-glycero-beta-D-manno-heptose + diphosphate. Its pathway is nucleotide-sugar biosynthesis; ADP-L-glycero-beta-D-manno-heptose biosynthesis; ADP-L-glycero-beta-D-manno-heptose from D-glycero-beta-D-manno-heptose 7-phosphate: step 1/4. The protein operates within nucleotide-sugar biosynthesis; ADP-L-glycero-beta-D-manno-heptose biosynthesis; ADP-L-glycero-beta-D-manno-heptose from D-glycero-beta-D-manno-heptose 7-phosphate: step 3/4. It functions in the pathway bacterial outer membrane biogenesis; LPS core biosynthesis. Its function is as follows. Catalyzes the phosphorylation of D-glycero-D-manno-heptose 7-phosphate at the C-1 position to selectively form D-glycero-beta-D-manno-heptose-1,7-bisphosphate. Catalyzes the ADP transfer from ATP to D-glycero-beta-D-manno-heptose 1-phosphate, yielding ADP-D-glycero-beta-D-manno-heptose. This chain is Bifunctional protein HldE, found in Helicobacter pylori (strain J99 / ATCC 700824) (Campylobacter pylori J99).